The sequence spans 281 residues: Diaminopimelate epimerase (281 aa).

Asparagine 13, glutamine 46, and asparagine 66 together coordinate substrate. Cysteine 75 (proton donor) is an active-site residue. Substrate-binding positions include 76–77, asparagine 160, asparagine 193, and 211–212; these read GN and ER. Catalysis depends on cysteine 220, which acts as the Proton acceptor. 221–222 serves as a coordination point for substrate; that stretch reads GT.

It belongs to the diaminopimelate epimerase family. As to quaternary structure, homodimer.

The protein resides in the cytoplasm. It catalyses the reaction (2S,6S)-2,6-diaminopimelate = meso-2,6-diaminopimelate. It functions in the pathway amino-acid biosynthesis; L-lysine biosynthesis via DAP pathway; DL-2,6-diaminopimelate from LL-2,6-diaminopimelate: step 1/1. Catalyzes the stereoinversion of LL-2,6-diaminopimelate (L,L-DAP) to meso-diaminopimelate (meso-DAP), a precursor of L-lysine and an essential component of the bacterial peptidoglycan. This Acinetobacter baumannii (strain AB307-0294) protein is Diaminopimelate epimerase.